The primary structure comprises 408 residues: AA9 family lytic polysaccharide monooxygenase A (408 aa).

Positions 1-20 (MKTTTYSLLALAAASKLASA) are cleaved as a signal peptide. Cu(2+)-binding residues include H21 and H103. A disulfide bond links C63 and C186. The N-linked (GlcNAc...) asparagine glycan is linked to N151. Position 172 (H172) interacts with O2. A Cu(2+)-binding site is contributed by Y183. Residues N331 and N381 are each glycosylated (N-linked (GlcNAc...) asparagine). Residues 369-405 (GVAKQYERCGGINHTGPTTCESGSVCKKWNPYYYQCV) enclose the CBM1 domain.

Belongs to the polysaccharide monooxygenase AA9 family. Cu(2+) is required as a cofactor.

Its subcellular location is the secreted. It carries out the reaction [(1-&gt;4)-beta-D-glucosyl]n+m + reduced acceptor + O2 = 4-dehydro-beta-D-glucosyl-[(1-&gt;4)-beta-D-glucosyl]n-1 + [(1-&gt;4)-beta-D-glucosyl]m + acceptor + H2O.. Its function is as follows. Lytic polysaccharide monooxygenase (LPMO) that depolymerizes crystalline and amorphous polysaccharides via the oxidation of scissile alpha- or beta-(1-4)-glycosidic bonds, yielding C4 oxidation products. Catalysis by LPMOs requires the reduction of the active-site copper from Cu(II) to Cu(I) by a reducing agent and H(2)O(2) or O(2) as a cosubstrate. The chain is AA9 family lytic polysaccharide monooxygenase A (eglD) from Aspergillus kawachii (strain NBRC 4308) (White koji mold).